Reading from the N-terminus, the 459-residue chain is Cysteine--tRNA ligase (459 aa).

Zn(2+) is bound at residue C28. Positions I30–H40 match the 'HIGH' region motif. Positions 209, 234, and 238 each coordinate Zn(2+). The short motif at K266–S270 is the 'KMSKS' region element. ATP is bound at residue K269.

This sequence belongs to the class-I aminoacyl-tRNA synthetase family. As to quaternary structure, monomer. It depends on Zn(2+) as a cofactor.

It localises to the cytoplasm. It catalyses the reaction tRNA(Cys) + L-cysteine + ATP = L-cysteinyl-tRNA(Cys) + AMP + diphosphate. The chain is Cysteine--tRNA ligase from Shewanella woodyi (strain ATCC 51908 / MS32).